The chain runs to 1030 residues: E3 ubiquitin-protein ligase mib1 (1030 aa).

An MIB/HERC2 1 domain is found at 6–74; that stretch reads NNRVMMEGVG…AYDVRILDSA (69 aa). The segment at 80 to 132 adopts a ZZ-type zinc-finger fold; the sequence is HDGTMCDTCRQQPIIGIRWKCAECTNYDLCTTCYHGDKHHLRHRFYRITTPGS. Cys85, Cys88, Cys100, Cys103, Cys109, Cys112, His118, and His122 together coordinate Zn(2+). Residues 143-221 form the MIB/HERC2 2 domain; sequence SKKITARGIF…MSDLKCVQDA (79 aa). 9 ANK repeats span residues 430–460, 463–492, 496–525, 529–558, 562–591, 595–627, 631–661, 665–694, and 698–727; these read DINE…DVNG, AGHT…DLEA, DGDR…DLNA, RRQT…HPSL, EGDT…DVTI, NGFN…IVDE, DGYT…NLDV, NQQT…KLDV, and DGDT…VSKV. 2 RING-type zinc fingers span residues 817-852 and 864-899; these read CMVC…LICK and CVVC…VQCR. Residues 957 to 986 adopt a coiled-coil conformation; sequence ALQRDKDNTNVNADVQKLQQQLQDIKEQTM. The segment at 987-1020 adopts an RING-type 3 zinc-finger fold; the sequence is CPVCLDRLKNMIFMCGHGTCQLCGDRMSECPICR.

Interacts with deltaA (dla) and deltaD (dld).

Its subcellular location is the cytoplasm. It is found in the cytoskeleton. It localises to the microtubule organizing center. The protein localises to the centrosome. The protein resides in the centriolar satellite. Its subcellular location is the cell membrane. It catalyses the reaction S-ubiquitinyl-[E2 ubiquitin-conjugating enzyme]-L-cysteine + [acceptor protein]-L-lysine = [E2 ubiquitin-conjugating enzyme]-L-cysteine + N(6)-ubiquitinyl-[acceptor protein]-L-lysine.. The protein operates within protein modification; protein ubiquitination. Its function is as follows. E3 ubiquitin-protein ligase that mediates ubiquitination of Delta receptors, which act as ligands of Notch proteins. Positively regulates the Delta-mediated Notch signaling by ubiquitinating the intracellular domain of Delta, leading to endocytosis of Delta receptors. It thereby participates in many processes regulated by the Notch signaling pathway, such as midline cell fate specification prior to germ layer formation, patterning of sensory cell differentiation in the ear, neurogenesis of the hindbrain and commitment to a secretory fate in the intestine. Essential for early embryonic development. The chain is E3 ubiquitin-protein ligase mib1 (mib1) from Danio rerio (Zebrafish).